Reading from the N-terminus, the 870-residue chain is Probable inorganic carbon transporter subunit DabA (870 aa).

The Zn(2+) site is built by Cys-381, Asp-383, His-564, and Cys-579.

This sequence belongs to the inorganic carbon transporter (TC 9.A.2) DabA family. In terms of assembly, forms a complex with DabB. Requires Zn(2+) as cofactor.

The protein localises to the cell membrane. In terms of biological role, part of an energy-coupled inorganic carbon pump. The sequence is that of Probable inorganic carbon transporter subunit DabA from Geobacillus kaustophilus (strain HTA426).